Here is a 267-residue protein sequence, read N- to C-terminus: Heme-containing CO-sensing transcriptional regulator RcoM 2 (267 aa).

Residues 15-86 (RAETFQHKLE…KSRDKLRFLL (72 aa)) enclose the PAS domain. Heme contacts are provided by histidine 74 and methionine 104. The HTH LytTR-type domain maps to 161 to 266 (IPVYRKSRVI…TAQLKELLGV (106 aa)).

Heme serves as cofactor.

It localises to the cytoplasm. In terms of biological role, one-component, b-type heme-containing aerobic sensor and transcriptional regulator that responds to CO by activating the expression of the oxidation operon cox. The sequence is that of Heme-containing CO-sensing transcriptional regulator RcoM 2 (rcoM2) from Paraburkholderia xenovorans (strain LB400).